The primary structure comprises 118 residues: MKTTRRDATRSRHQRVRRKVVGTAERPRLAVFRSNQHIYAQVIDDAQQHTLAAASTVESDLKSSSGATCDASTAVGKLVAERAIEKGIKAVVFDRGGNLYHGRVKALADAAREAGLEF.

Residues 1–10 are compositionally biased toward basic and acidic residues; that stretch reads MKTTRRDATR. Positions 1 to 20 are disordered; that stretch reads MKTTRRDATRSRHQRVRRKV. Residues 11–20 show a composition bias toward basic residues; sequence SRHQRVRRKV.

Belongs to the universal ribosomal protein uL18 family. In terms of assembly, part of the 50S ribosomal subunit; part of the 5S rRNA/L5/L18/L25 subcomplex. Contacts the 5S and 23S rRNAs.

Functionally, this is one of the proteins that bind and probably mediate the attachment of the 5S RNA into the large ribosomal subunit, where it forms part of the central protuberance. In Acaryochloris marina (strain MBIC 11017), this protein is Large ribosomal subunit protein uL18.